We begin with the raw amino-acid sequence, 379 residues long: Na(+)/H(+) antiporter NhaA (379 aa).

12 helical membrane-spanning segments follow: residues 14-34, 59-79, 95-115, 125-145, 154-174, 175-195, 200-220, 221-241, 261-281, 292-312, 328-348, and 359-379; these read AGGI…NTPL, LLMW…GMEV, VFPA…FLVF, GWAI…ALLG, IFLL…IALF, FSHD…AILI, LKIT…ASVL, KSGV…PLNG, FAIL…GMGM, IALG…FVAV, IFAV…LAGL, and VTAL…VLGY.

This sequence belongs to the NhaA Na(+)/H(+) (TC 2.A.33) antiporter family.

It is found in the cell inner membrane. It catalyses the reaction Na(+)(in) + 2 H(+)(out) = Na(+)(out) + 2 H(+)(in). Its function is as follows. Na(+)/H(+) antiporter that extrudes sodium in exchange for external protons. The protein is Na(+)/H(+) antiporter NhaA of Pasteurella multocida (strain Pm70).